The chain runs to 173 residues: Flavodoxin 2 (173 aa).

Positions 3–165 (MGLFYGSSTC…RIQSWCEQIL (163 aa)) constitute a Flavodoxin-like domain.

This sequence belongs to the flavodoxin family. It depends on FMN as a cofactor.

Its function is as follows. Low-potential electron donor to a number of redox enzymes. The chain is Flavodoxin 2 (fldB) from Escherichia coli O157:H7.